The primary structure comprises 259 residues: tRNA-cytidine(32) 2-sulfurtransferase (259 aa).

The PP-loop motif motif lies at 40–45 (SGGKDS). [4Fe-4S] cluster contacts are provided by cysteine 114, cysteine 117, and cysteine 205.

This sequence belongs to the TtcA family. As to quaternary structure, homodimer. Mg(2+) is required as a cofactor. Requires [4Fe-4S] cluster as cofactor.

Its subcellular location is the cytoplasm. It catalyses the reaction cytidine(32) in tRNA + S-sulfanyl-L-cysteinyl-[cysteine desulfurase] + AH2 + ATP = 2-thiocytidine(32) in tRNA + L-cysteinyl-[cysteine desulfurase] + A + AMP + diphosphate + H(+). It functions in the pathway tRNA modification. Functionally, catalyzes the ATP-dependent 2-thiolation of cytidine in position 32 of tRNA, to form 2-thiocytidine (s(2)C32). The sulfur atoms are provided by the cysteine/cysteine desulfurase (IscS) system. The chain is tRNA-cytidine(32) 2-sulfurtransferase from Bdellovibrio bacteriovorus (strain ATCC 15356 / DSM 50701 / NCIMB 9529 / HD100).